A 148-amino-acid chain; its full sequence is Large-conductance mechanosensitive channel (148 aa).

The next 2 helical transmembrane spans lie at 15–35 and 84–104; these read LDMA…KSLV and VGVF…VFLL.

The protein belongs to the MscL family. In terms of assembly, homopentamer.

The protein resides in the cell inner membrane. Functionally, channel that opens in response to stretch forces in the membrane lipid bilayer. May participate in the regulation of osmotic pressure changes within the cell. In Nitratidesulfovibrio vulgaris (strain DSM 19637 / Miyazaki F) (Desulfovibrio vulgaris), this protein is Large-conductance mechanosensitive channel.